The chain runs to 540 residues: Acetyl-coenzyme A carboxylase carboxyl transferase subunit beta, chloroplastic (540 aa).

Residues 229–249 (YSDNGSSSIRTRTSTSSGSSY) are disordered. Residues 233–248 (GSSSIRTRTSTSSGSS) show a composition bias toward low complexity. In terms of domain architecture, CoA carboxyltransferase N-terminal spans 267–538 (LWVQCENCYA…TFHPLKSNKV (272 aa)). Positions 271, 274, 290, and 293 each coordinate Zn(2+). The segment at 271–293 (CENCYALNYNKLFRSKMNVCEQC) adopts a C4-type zinc-finger fold.

This sequence belongs to the AccD/PCCB family. Acetyl-CoA carboxylase is a heterohexamer composed of biotin carboxyl carrier protein, biotin carboxylase and 2 subunits each of ACCase subunit alpha and ACCase plastid-coded subunit beta (accD). The cofactor is Zn(2+).

The protein resides in the plastid. Its subcellular location is the chloroplast stroma. It carries out the reaction N(6)-carboxybiotinyl-L-lysyl-[protein] + acetyl-CoA = N(6)-biotinyl-L-lysyl-[protein] + malonyl-CoA. It participates in lipid metabolism; malonyl-CoA biosynthesis; malonyl-CoA from acetyl-CoA: step 1/1. Component of the acetyl coenzyme A carboxylase (ACC) complex. Biotin carboxylase (BC) catalyzes the carboxylation of biotin on its carrier protein (BCCP) and then the CO(2) group is transferred by the transcarboxylase to acetyl-CoA to form malonyl-CoA. In Amborella trichopoda, this protein is Acetyl-coenzyme A carboxylase carboxyl transferase subunit beta, chloroplastic.